The following is a 224-amino-acid chain: 2-phospho-L-lactate guanylyltransferase (224 aa).

The protein belongs to the CofC family. As to quaternary structure, homodimer.

The enzyme catalyses (2S)-2-phospholactate + GTP + H(+) = (2S)-lactyl-2-diphospho-5'-guanosine + diphosphate. Its pathway is cofactor biosynthesis; coenzyme F420 biosynthesis. Guanylyltransferase that catalyzes the activation of (2S)-2-phospholactate (2-PL) as (2S)-lactyl-2-diphospho-5'-guanosine, via the condensation of 2-PL with GTP. It is involved in the biosynthesis of coenzyme F420, a hydride carrier cofactor. The polypeptide is 2-phospho-L-lactate guanylyltransferase (Methanobrevibacter smithii (strain ATCC 35061 / DSM 861 / OCM 144 / PS)).